The chain runs to 89 residues: Small ribosomal subunit protein uS15 (89 aa).

The protein belongs to the universal ribosomal protein uS15 family. As to quaternary structure, part of the 30S ribosomal subunit. Forms a bridge to the 50S subunit in the 70S ribosome, contacting the 23S rRNA.

One of the primary rRNA binding proteins, it binds directly to 16S rRNA where it helps nucleate assembly of the platform of the 30S subunit by binding and bridging several RNA helices of the 16S rRNA. In terms of biological role, forms an intersubunit bridge (bridge B4) with the 23S rRNA of the 50S subunit in the ribosome. This chain is Small ribosomal subunit protein uS15, found in Azobacteroides pseudotrichonymphae genomovar. CFP2.